We begin with the raw amino-acid sequence, 392 residues long: Xyloside xylosyltransferase 1 (392 aa).

Residues 1–19 (MGLLRGGAACARAMARLGA) are Cytoplasmic-facing. Residues 20 to 42 (LRSHYCALLLAAALAVCAFYYLG) traverse the membrane as a helical; Signal-anchor for type II membrane protein segment. The Lumenal portion of the chain corresponds to 43–392 (SGRETFSSAT…GNCNTPIPED (350 aa)). Position 103 to 105 (103 to 105 (MFT)) interacts with UDP-alpha-D-xylose. Aspartate 225 contributes to the Mn(2+) binding site. Leucine 226 lines the UDP-alpha-D-xylose pocket. Aspartate 227 is a binding site for Mn(2+). An interaction with target proteins region spans residues 262-265 (HTFW). The UDP-alpha-D-xylose site is built by serine 289, leucine 327, and glutamine 330. A glycoprotein contacts are provided by glutamine 330 and tryptophan 359. 2 disulfide bridges follow: cysteine 349/cysteine 374 and cysteine 356/cysteine 385. A Mn(2+)-binding site is contributed by histidine 382. Asparagine 384 contributes to the a glycoprotein binding site.

This sequence belongs to the glycosyltransferase 8 family. As to quaternary structure, homodimer. Dimer formation may be essential for the retention in endoplasmic reticulum. Requires Mg(2+) as cofactor. It depends on Mn(2+) as a cofactor.

Its subcellular location is the endoplasmic reticulum membrane. It carries out the reaction 3-O-[alpha-D-xylosyl-(1-&gt;3)-beta-D-glucosyl]-L-seryl-[EGF-like domain protein] + UDP-alpha-D-xylose = 3-O-[alpha-D-xylosyl-(1-&gt;3)-alpha-D-xylosyl-(1-&gt;3)-beta-D-glucosyl]-L-seryl-[EGF-like domain protein] + UDP + H(+). In terms of biological role, alpha-1,3-xylosyltransferase, which elongates the O-linked xylose-glucose disaccharide attached to EGF-like repeats in the extracellular domain of target proteins by catalyzing the addition of the second xylose. Known targets include Notch proteins and coagulation factors, such as F9. The chain is Xyloside xylosyltransferase 1 (Xxylt1) from Mus musculus (Mouse).